The chain runs to 100 residues: UPF0213 protein YhbQ (100 aa).

The region spanning 2-77 is the GIY-YIG domain; the sequence is TPWFLYLIRT…KQLTKRQKER (76 aa).

It belongs to the UPF0213 family.

In Escherichia coli O7:K1 (strain IAI39 / ExPEC), this protein is UPF0213 protein YhbQ.